The chain runs to 1074 residues: DNA helicase B (1074 aa).

Disordered regions lie at residues 1–38, 380–420, and 932–1014; these read MARQDRLRELLGPLHPYKSDDEEEDCAQEEEGEQEEEF, GAKP…HVRS, and GSCA…FDEE. Acidic residues predominate over residues 20 to 38; the sequence is DDEEEDCAQEEEGEQEEEF. Over residues 934–946 the composition is skewed to polar residues; that stretch reads CAPSTGFASQPSS. Phosphoserine is present on residues S942 and S946. The residue at position 992 (T992) is a Phosphothreonine. Phosphoserine occurs at positions 1015 and 1026. The short motif at 1022 to 1046 is the Nuclear export signal element; the sequence is VEAPSPQVSSVFQNMRLNTLTPRQL. Residues 1040-1074 form a disordered region; it reads TLTPRQLFKPTDNQDTGTAGVADDANDPSNQEMEM.

It belongs to the RecD family. HELB subfamily. Binds to RPA1; this interaction promotes HELB recruitment to chromatin following DNA damage. Interacts with at least two subunits of the DNA polymerase alpha complex. Interacts with CDC45. Interacts with TOPB1. Post-translationally, phosphorylated at Ser-942 by CDK2 during the G1/S transition, resulting in its nuclear export into the cytoplasm. As S phase progresses, its exclusion from the nucleus promotes the activation of long-range resection.

The protein resides in the nucleus. It localises to the cytoplasm. It is found in the chromosome. It catalyses the reaction ATP + H2O = ADP + phosphate + H(+). In terms of biological role, 5'-3' DNA helicase involved in DNA damage response by acting as an inhibitor of DNA end resection. Recruitment to single-stranded DNA (ssDNA) following DNA damage leads to inhibit the nucleases catalyzing resection, such as EXO1, BLM and DNA2, possibly via the 5'-3' ssDNA translocase activity of HELB. As cells approach S phase, DNA end resection is promoted by the nuclear export of HELB following phosphorylation. Acts independently of TP53BP1. Unwinds duplex DNA with 5'-3' polarity. Has single-strand DNA-dependent ATPase and DNA helicase activities. Prefers ATP and dATP as substrates. During S phase, may facilitate cellular recovery from replication stress. In Mus musculus (Mouse), this protein is DNA helicase B.